A 213-amino-acid polypeptide reads, in one-letter code: Ribosomal RNA small subunit methyltransferase G (213 aa).

Residues glycine 75, phenylalanine 80, 128–129 (IE), and arginine 144 contribute to the S-adenosyl-L-methionine site.

This sequence belongs to the methyltransferase superfamily. RNA methyltransferase RsmG family.

It is found in the cytoplasm. The catalysed reaction is guanosine(527) in 16S rRNA + S-adenosyl-L-methionine = N(7)-methylguanosine(527) in 16S rRNA + S-adenosyl-L-homocysteine. Its function is as follows. Specifically methylates the N7 position of guanine in position 527 of 16S rRNA. The protein is Ribosomal RNA small subunit methyltransferase G of Brucella abortus (strain S19).